Consider the following 375-residue polypeptide: MTLDTVTPRTNLLGLTREEMESFFVSLGEKKFRAAQVMKWIHHEGCADFASMTNLSKALRTRLEELAEIRGPRVVYEGTSQDGTRKWVLEVEDGSYVETVLIPAEGGKRRTLCVSSQVGCSLDCSFCSTGKQGFQRNLTSAEIIGQVWVASNSFGARRDTTNRPVTNVVMMGMGEPLLNYDNVVPAMKLMLDDNGYGLSKRRVTLSTSGVVPKLDQLGDELDVSLAVSLHAANDELRNELVPLNRKYNIATLLDACRRYLAKCDDTRMLTIEYTLIKDVNDQQHHAEELAALLADLPSKINLIPFNPFPHSGYEKPSRNQVMRFQQWLYDLGYTALVRTTRGDDIDAACGQLVGRVKDRTKRHERYIQSIQLDAD.

The Proton acceptor role is filled by glutamate 98. Residues 106 to 346 form the Radical SAM core domain; that stretch reads GGKRRTLCVS…VRTTRGDDID (241 aa). The cysteines at positions 113 and 349 are disulfide-linked. [4Fe-4S] cluster-binding residues include cysteine 120, cysteine 124, and cysteine 127. Residues 174–175, serine 206, 228–230, and asparagine 306 contribute to the S-adenosyl-L-methionine site; these read GE and SLH. Residue cysteine 349 is the S-methylcysteine intermediate of the active site.

The protein belongs to the radical SAM superfamily. RlmN family. Requires [4Fe-4S] cluster as cofactor.

Its subcellular location is the cytoplasm. The enzyme catalyses adenosine(2503) in 23S rRNA + 2 reduced [2Fe-2S]-[ferredoxin] + 2 S-adenosyl-L-methionine = 2-methyladenosine(2503) in 23S rRNA + 5'-deoxyadenosine + L-methionine + 2 oxidized [2Fe-2S]-[ferredoxin] + S-adenosyl-L-homocysteine. It carries out the reaction adenosine(37) in tRNA + 2 reduced [2Fe-2S]-[ferredoxin] + 2 S-adenosyl-L-methionine = 2-methyladenosine(37) in tRNA + 5'-deoxyadenosine + L-methionine + 2 oxidized [2Fe-2S]-[ferredoxin] + S-adenosyl-L-homocysteine. Specifically methylates position 2 of adenine 2503 in 23S rRNA and position 2 of adenine 37 in tRNAs. m2A2503 modification seems to play a crucial role in the proofreading step occurring at the peptidyl transferase center and thus would serve to optimize ribosomal fidelity. The chain is Dual-specificity RNA methyltransferase RlmN from Chromohalobacter salexigens (strain ATCC BAA-138 / DSM 3043 / CIP 106854 / NCIMB 13768 / 1H11).